Here is a 66-residue protein sequence, read N- to C-terminus: Metallothionein-like protein type 3 (66 aa).

Belongs to the metallothionein superfamily. Type 15 family.

Its function is as follows. Metallothioneins have a high content of cysteine residues that bind various heavy metals. The polypeptide is Metallothionein-like protein type 3 (MT2) (Malus domestica (Apple)).